We begin with the raw amino-acid sequence, 153 residues long: 3-hydroxyacyl-[acyl-carrier-protein] dehydratase FabZ (153 aa).

Residue His-57 is part of the active site.

This sequence belongs to the thioester dehydratase family. FabZ subfamily.

It is found in the cytoplasm. It catalyses the reaction a (3R)-hydroxyacyl-[ACP] = a (2E)-enoyl-[ACP] + H2O. Its function is as follows. Involved in unsaturated fatty acids biosynthesis. Catalyzes the dehydration of short chain beta-hydroxyacyl-ACPs and long chain saturated and unsaturated beta-hydroxyacyl-ACPs. The polypeptide is 3-hydroxyacyl-[acyl-carrier-protein] dehydratase FabZ (Vibrio cholerae serotype O1 (strain ATCC 39315 / El Tor Inaba N16961)).